Reading from the N-terminus, the 252-residue chain is Carboxy-S-adenosyl-L-methionine synthase (252 aa).

S-adenosyl-L-methionine contacts are provided by residues Tyr45, 70 to 72 (GCS), 95 to 96 (DN), 123 to 124 (DI), Asn138, and Arg205.

This sequence belongs to the class I-like SAM-binding methyltransferase superfamily. Cx-SAM synthase family. In terms of assembly, homodimer.

It catalyses the reaction prephenate + S-adenosyl-L-methionine = carboxy-S-adenosyl-L-methionine + 3-phenylpyruvate + H2O. Its function is as follows. Catalyzes the conversion of S-adenosyl-L-methionine (SAM) to carboxy-S-adenosyl-L-methionine (Cx-SAM). This Photorhabdus laumondii subsp. laumondii (strain DSM 15139 / CIP 105565 / TT01) (Photorhabdus luminescens subsp. laumondii) protein is Carboxy-S-adenosyl-L-methionine synthase.